A 581-amino-acid polypeptide reads, in one-letter code: LRLLLTTSVLRLARAANPFVAQQTPPDPCYDESGAPRRCIPEFVNAAFGKEVQASSTCGKPPTRHCDASDPRRAHPPAYLTDLNTAANMTCWRSETLHHLPHNVTLTLSLGKKFEVVYVSLQFCSPRPESTAIFKSMDYGKTWVPYQYYSSQCRKIYGKPSKATVTKQNEQEALCTDGLTDLYPLTGGLIAFSTLDGRPSAQDFDSSPVLQDWVTATDIRVVFSRPHLFRELGGREAGEEDGGAGATPYYYSVGELQVGGRCKCNGHASRCVKDKEQKLVCDCKHNTEGPECDRCKPFHYDRPWQRASAREANECLACNCNLHARRCRFNMELYKLSGRKSGGVCLNCRHNTAGRHCHYCKEGFYRDLSKSITDRKACKACDCHPVGAAGKTCNQTTGQCPCKDGVTGLTCNRCAKGFQQSRSPVAPCIKIPAINPTSLVTSTEAPADCDSYCKPAKGNYKINMKKYCKKDYVVQVNILEMETVANWAKFTINILSVYKCRDERVKRGDNFLWIHLKDLSCKCPKIQISKKYLVMGISENSTDRPGLMADKNSLVIQWRDAWTRRLRKLQRREKKGKCVKP.

The first 15 residues, 1-15 (LRLLLTTSVLRLARA), serve as a signal peptide directing secretion. The 227-residue stretch at 35-261 (APRRCIPEFV…SVGELQVGGR (227 aa)) folds into the Laminin N-terminal domain. N-linked (GlcNAc...) asparagine glycosylation is found at asparagine 88 and asparagine 103. Disulfide bonds link cysteine 91-cysteine 124, cysteine 262-cysteine 271, cysteine 264-cysteine 281, cysteine 283-cysteine 292, cysteine 295-cysteine 315, cysteine 318-cysteine 327, cysteine 320-cysteine 345, cysteine 348-cysteine 357, cysteine 360-cysteine 378, cysteine 381-cysteine 393, cysteine 383-cysteine 400, cysteine 402-cysteine 411, cysteine 414-cysteine 428, cysteine 449-cysteine 521, and cysteine 468-cysteine 578. Laminin EGF-like domains lie at 262–317 (CKCN…ECLA), 318–380 (CNCN…ACKA), and 381–430 (CDCH…PCIK). Asparagine 394 carries N-linked (GlcNAc...) asparagine glycosylation. Positions 449–578 (CDSYCKPAKG…LQRREKKGKC (130 aa)) constitute an NTR domain. The Cell attachment site signature appears at 507–509 (RGD). Asparagine 540 is a glycosylation site (N-linked (GlcNAc...) asparagine).

It is found in the secreted. The protein localises to the extracellular space. It localises to the extracellular matrix. In terms of biological role, netrins control guidance of CNS commissural axons and peripheral motor axons. In Gallus gallus (Chicken), this protein is Netrin-3 (NTN3).